The chain runs to 299 residues: UPF0282 protein TK1681 (299 aa).

Belongs to the UPF0282 family.

The polypeptide is UPF0282 protein TK1681 (Thermococcus kodakarensis (strain ATCC BAA-918 / JCM 12380 / KOD1) (Pyrococcus kodakaraensis (strain KOD1))).